The following is a 396-amino-acid chain: Putative ribosomal RNA large subunit methyltransferase YwbD (396 aa).

Positions 1–79 (MKLLTLKKAH…KHEQIDQAFF (79 aa)) constitute a PUA domain.

It belongs to the methyltransferase superfamily. RlmI family.

The protein resides in the cytoplasm. The sequence is that of Putative ribosomal RNA large subunit methyltransferase YwbD (ywbD) from Bacillus subtilis (strain 168).